The primary structure comprises 87 residues: Large ribosomal subunit protein eL33 (87 aa).

This sequence belongs to the eukaryotic ribosomal protein eL33 family.

The chain is Large ribosomal subunit protein eL33 from Pyrococcus woesei.